We begin with the raw amino-acid sequence, 467 residues long: MATTVTLKSFTGLRQSSTEQTNFVSHVPSSLSLPQRRTSLRVTAARATPKLSNRKLRVAVIGGGPAGGAAAETLAQGGIETILIERKMDNCKPCGGAIPLCMVGEFNLPLDIIDRRVTKMKMISPSNIAVDIGRTLKEHEYIGMVRREVLDAYLRERAEKSGATVINGLFLKMDHPENWDSPYTLHYTEYDGKTGATGTKKTMEVDAVIGADGANSRVAKSIDAGDYDYAIAFQERIRIPDEKMTYYEDLAEMYVGDDVSPDFYGWVFPKCDHVAVGTGTVTHKGDIKKFQLATRNRAKDKILGGKIIRVEAHPIPEHPRPRRLSKRVALVGDAAGYVTKCSGEGIYFAAKSGRMCAEAIVEGSQNGKKMIDEGDLRKYLEKWDKTYLPTYRVLDVLQKVFYRSNPAREAFVEMCNDEYVQKMTFDSYLYKRVAPGSPLEDIKLAVNTIGSLVRANALRREIEKLSV.

Residues 1–43 (MATTVTLKSFTGLRQSSTEQTNFVSHVPSSLSLPQRRTSLRVT) constitute a chloroplast transit peptide.

Belongs to the geranylgeranyl reductase family. ChlP subfamily. Part of the FLU-containing chloroplast membrane complex composed of FLU, CRD1, PORB, PORC, CHLP and HEMA1.

It is found in the plastid. Its subcellular location is the chloroplast membrane. It carries out the reaction phytyl diphosphate + 3 NADP(+) = geranylgeranyl diphosphate + 3 NADPH + 3 H(+). It participates in porphyrin-containing compound metabolism; chlorophyll biosynthesis. Its pathway is cofactor biosynthesis; tocopherol biosynthesis. In terms of biological role, catalyzes the reduction of geranylgeranyl diphosphate to phytyl diphosphate, providing phytol for both tocopherol and chlorophyll synthesis. The protein is Geranylgeranyl diphosphate reductase, chloroplastic (CHLP) of Arabidopsis thaliana (Mouse-ear cress).